The sequence spans 198 residues: Guanylyl cyclase-activating protein 2 (198 aa).

Gly2 carries N-myristoyl glycine lipidation. EF-hand domains follow at residues 16 to 51 (DVAE…QDNH), 52 to 87 (EAAE…VLRG), 88 to 123 (KLEH…IYKL), and 139 to 174 (TPEE…DKWV). Ca(2+) is bound by residues Asp65, Asn67, Asp69, Thr71, Glu76, Asp101, Asp103, Asn105, Cys107, Glu112, Asp152, Asn154, Asp156, Gln158, and Glu163.

As to quaternary structure, undergoes dimerization at low calcium ions concentration, while the presence of calcium ions inhibits its dimerization. Dimerization correlates with its ability to activate GC. In terms of tissue distribution, retina and pineal gland.

Its function is as follows. Stimulates synthesis of cGMP in photoreceptors. Thought to mediate Ca(2+)-sensitive regulation of retinal guanylyl cyclase (GC), a key event in recovery of the dark state of rod photoreceptors following light exposure. This chain is Guanylyl cyclase-activating protein 2 (GUCA1B), found in Gallus gallus (Chicken).